The primary structure comprises 438 residues: UDP-N-acetylmuramoylalanine--D-glutamate ligase (438 aa).

Residue 112 to 118 coordinates ATP; sequence GSNGKST.

It belongs to the MurCDEF family.

The protein resides in the cytoplasm. It catalyses the reaction UDP-N-acetyl-alpha-D-muramoyl-L-alanine + D-glutamate + ATP = UDP-N-acetyl-alpha-D-muramoyl-L-alanyl-D-glutamate + ADP + phosphate + H(+). It functions in the pathway cell wall biogenesis; peptidoglycan biosynthesis. Its function is as follows. Cell wall formation. Catalyzes the addition of glutamate to the nucleotide precursor UDP-N-acetylmuramoyl-L-alanine (UMA). This chain is UDP-N-acetylmuramoylalanine--D-glutamate ligase, found in Shigella boydii serotype 4 (strain Sb227).